A 332-amino-acid chain; its full sequence is MITPRSSQSLEMKVQTELEHSPKLQEEPDRSPSLVDSSVIRIGTDEQNESPAEATSSPVEVAEDPGANLFPPPLPQPRICMWKYLDIHSMHRLEKAATVEEMREVLAELLELGGPEQSLRDAIILDLFSHALIFCRQQGFSLEQTSAACALLQDLHKACVATPLGNVEECYRYFTSVLFCHGVRRPPFSIDLFKEEQLLALADYVVNTYFRHFKLYKYVFTPQVRLDLSLSYMGLQSLHLWPEEKEDEEATVEQAATPQEEEPEAVTEAEQQPSEVCILQTYIKCQLNKELRQLQQLVEERLKESEERLSNRLAALERPYQTPPSKGKSKAK.

Residues 1-10 (MITPRSSQSL) show a composition bias toward polar residues. Disordered regions lie at residues 1-70 (MITP…ANLF), 246-271 (EDEEATVEQAATPQEEEPEAVTEAEQ), and 308-332 (RLSNRLAALERPYQTPPSKGKSKAK). Over residues 14–30 (VQTELEHSPKLQEEPDR) the composition is skewed to basic and acidic residues. The span at 49 to 58 (ESPAEATSSP) shows a compositional bias: polar residues. Residues 287–308 (LNKELRQLQQLVEERLKESEER) are a coiled coil.

Specifically expressed in testis (at protein level).

It is found in the cell projection. It localises to the cilium. The protein resides in the flagellum. Its subcellular location is the cytoplasmic vesicle. The protein localises to the secretory vesicle. It is found in the acrosome. It localises to the cytoplasm. The sequence is that of Cilia- and flagella-associated protein 119 from Rattus norvegicus (Rat).